Here is a 410-residue protein sequence, read N- to C-terminus: Segmentation protein fushi tarazu (410 aa).

Disordered stretches follow at residues 71–93, 138–157, and 175–221; these read TQTV…KAED, PAVS…QEYV, and SPQS…SAVS. The span at 76–85 shows a compositional bias: pro residues; the sequence is PVQPTTPPPK. A compositionally biased stretch (pro residues) spans 190 to 199; sequence TPPPTTPTSL. A DNA-binding region (homeobox) is located at residues 254 to 313; the sequence is SKRTRQTYTRYQTLELEKEFHFNRYITRRRRIDIANALSLSERQIKIWFQNRRMKSKKDR.

The protein belongs to the Antp homeobox family. Post-translationally, phosphorylated at as many as 16 sites. As to expression, expressed early in development in a striped pattern at the blastoderm stage. Later expressed in a specific subset of neuronal precursor cells, neurons and glia in the developing CNS. Between 5 and 6 hours of development, found in the midline precursor-2 cells in a segmentally repeating pattern. Expression in many other neuronal precursors follows and reaches a second peak of abundance at 9 hours of development. Expressed in the hindgut between 11-15 hours of development.

The protein localises to the nucleus. May play a role in determining neuronal identity, may be directly involved in specifying identity of individual neurons. Required during embryogenesis for the process of body segmentation. Homeotic protein, required in alternating segment primordia, it specifies the correct number of segments. The sequence is that of Segmentation protein fushi tarazu (ftz) from Drosophila melanogaster (Fruit fly).